A 459-amino-acid polypeptide reads, in one-letter code: Vasoactive intestinal polypeptide receptor 1 (459 aa).

The N-terminal stretch at 1-30 (MRPPSPPHVRWLCVLAGALACALRPAGSQA) is a signal peptide. Residues 31–142 (ASPQHECEYL…EQQQTKFYNT (112 aa)) lie on the Extracellular side of the membrane. Intrachain disulfides connect C37-C209, C50-C72, C63-C105, C86-C122, and C216-C286. 3 N-linked (GlcNAc...) asparagine glycosylation sites follow: N58, N69, and N100. A helical membrane pass occupies residues 143–167 (VKTGYTIGYSLSLASLLVAMAILSL). Residues 168-175 (FRKLHCTR) are Cytoplasmic-facing. The helical transmembrane segment at 176 to 197 (NYIHMHLFMSFILRATAVFIKD) threads the bilayer. Residues 198 to 217 (MALFNSGEIDHCSEASVGCK) lie on the Extracellular side of the membrane. Residues 218-242 (AAVVFFQYCVMANFFWLLVEGLYLY) traverse the membrane as a helical segment. The Cytoplasmic portion of the chain corresponds to 243 to 255 (TLLAVSFFSERKY). Residues 256–277 (FWGYILIGWGVPSVFITIWTVV) form a helical membrane-spanning segment. At 278 to 293 (RIYFEDFGCWDTIINS) the chain is on the extracellular side. An N-linked (GlcNAc...) asparagine glycan is attached at N292. The chain crosses the membrane as a helical span at residues 294–318 (SLWWIIKAPILLSILVNFVLFICII). At 319–340 (RILVQKLRPPDIGKNDSSPYSR) the chain is on the cytoplasmic side. A helical transmembrane segment spans residues 341 to 361 (LAKSTLLLIPLFGIHYVMFAF). At 362–369 (FPDNFKAQ) the chain is on the extracellular side. Residues 370–393 (VKMVFELVVGSFQGFVVAILYCFL) form a helical membrane-spanning segment. Residues 394–459 (NGEVQAELRR…SSFQAEVSLV (66 aa)) lie on the Cytoplasmic side of the membrane.

The protein belongs to the G-protein coupled receptor 2 family. Interacts with ADCYAP1/PACAP; activated by both PACAP27 and PACAP38 neuropeptides. Interacts with VIP; the interaction results in VIPR1 activation. In liver, lung, intestines, thymus and brain (mostly in the cerebral cortex and hippocampus).

Its subcellular location is the cell membrane. G protein-coupled receptor activated by the neuropeptides vasoactive intestinal peptide (VIP) and pituitary adenylate cyclase-activating polypeptide (ADCYAP1/PACAP). Binds VIP and both PACAP27 and PACAP38 bioactive peptides with the following order of ligand affinity VIP = PACAP27 &gt; PACAP38. Ligand binding causes a conformation change that triggers signaling via guanine nucleotide-binding proteins (G proteins) and modulates the activity of downstream effectors. Activates cAMP-dependent pathway. The protein is Vasoactive intestinal polypeptide receptor 1 of Rattus norvegicus (Rat).